We begin with the raw amino-acid sequence, 505 residues long: Metal transporter Nramp3.2 (505 aa).

A run of 12 helical transmembrane segments spans residues 50–70, 78–98, 127–147, 159–179, 187–207, 233–253, 280–300, 321–341, 369–389, 400–420, 439–459, and 466–486; these read LWLF…PGNL, AIAG…GLLV, MVLW…EVIG, FVPL…FLFL, LEAV…WMFA, AVGV…SALV, ALVI…KGFY, YGGG…AAGQ, ALIT…VFDT, WLNV…LCLV, AWLV…DFFF, and AFTT…IYLI.

This sequence belongs to the NRAMP (TC 2.A.55) family. As to expression, expressed in roots, stems, buds and leaves.

Its subcellular location is the vacuole membrane. The enzyme catalyses Mn(2+)(in) = Mn(2+)(out). The catalysed reaction is Fe(2+)(in) = Fe(2+)(out). In terms of biological role, divalent metal transporter. Can transport manganese (Mn) and iron (Fe). Involved in the release of metals stored in the vacuole. This is Metal transporter Nramp3.2 from Populus trichocarpa (Western balsam poplar).